A 238-amino-acid polypeptide reads, in one-letter code: Purine nucleoside phosphorylase DeoD-type (238 aa).

Residue histidine 4 coordinates a purine D-ribonucleoside. Residues glycine 20, arginine 24, arginine 43, and 87-90 contribute to the phosphate site; that span reads RVGS. Residues 179 to 181 and 203 to 204 contribute to the a purine D-ribonucleoside site; these read EME and SD. The active-site Proton donor is the aspartate 204.

The protein belongs to the PNP/UDP phosphorylase family. As to quaternary structure, homohexamer; trimer of homodimers.

It catalyses the reaction a purine D-ribonucleoside + phosphate = a purine nucleobase + alpha-D-ribose 1-phosphate. The enzyme catalyses a purine 2'-deoxy-D-ribonucleoside + phosphate = a purine nucleobase + 2-deoxy-alpha-D-ribose 1-phosphate. Functionally, catalyzes the reversible phosphorolytic breakdown of the N-glycosidic bond in the beta-(deoxy)ribonucleoside molecules, with the formation of the corresponding free purine bases and pentose-1-phosphate. This chain is Purine nucleoside phosphorylase DeoD-type, found in Haemophilus influenzae (strain 86-028NP).